The sequence spans 612 residues: Dihydroxy-acid dehydratase (612 aa).

D81 serves as a coordination point for Mg(2+). A [2Fe-2S] cluster-binding site is contributed by C122. Positions 123 and 124 each coordinate Mg(2+). K124 is subject to N6-carboxylysine. C195 contacts [2Fe-2S] cluster. E491 contributes to the Mg(2+) binding site. Residue S517 is the Proton acceptor of the active site.

Belongs to the IlvD/Edd family. Homodimer. [2Fe-2S] cluster serves as cofactor. Requires Mg(2+) as cofactor.

The catalysed reaction is (2R)-2,3-dihydroxy-3-methylbutanoate = 3-methyl-2-oxobutanoate + H2O. It catalyses the reaction (2R,3R)-2,3-dihydroxy-3-methylpentanoate = (S)-3-methyl-2-oxopentanoate + H2O. It functions in the pathway amino-acid biosynthesis; L-isoleucine biosynthesis; L-isoleucine from 2-oxobutanoate: step 3/4. It participates in amino-acid biosynthesis; L-valine biosynthesis; L-valine from pyruvate: step 3/4. Functions in the biosynthesis of branched-chain amino acids. Catalyzes the dehydration of (2R,3R)-2,3-dihydroxy-3-methylpentanoate (2,3-dihydroxy-3-methylvalerate) into 2-oxo-3-methylpentanoate (2-oxo-3-methylvalerate) and of (2R)-2,3-dihydroxy-3-methylbutanoate (2,3-dihydroxyisovalerate) into 2-oxo-3-methylbutanoate (2-oxoisovalerate), the penultimate precursor to L-isoleucine and L-valine, respectively. This Haemophilus influenzae (strain PittEE) protein is Dihydroxy-acid dehydratase.